We begin with the raw amino-acid sequence, 196 residues long: Putative manganese efflux pump MntP (196 aa).

The next 6 membrane-spanning stretches (helical) occupy residues 3-23, 39-59, 67-87, 109-129, 137-157, and 172-192; these read PASL…ASIG, IGAV…ALGH, GVDH…MIWA, IWLI…VGIT, IIAA…LGTL, and ILGG…HLAG.

Belongs to the MntP (TC 9.B.29) family.

It localises to the cell inner membrane. Its function is as follows. Probably functions as a manganese efflux pump. The chain is Putative manganese efflux pump MntP from Chromohalobacter salexigens (strain ATCC BAA-138 / DSM 3043 / CIP 106854 / NCIMB 13768 / 1H11).